Consider the following 1709-residue polypeptide: Hybrid signal transduction histidine kinase L (1709 aa).

Disordered regions lie at residues 52–192 (SNNN…SPPH), 206–276 (FFSG…NSSD), 413–535 (TSNS…NNSC), and 554–615 (QQQQ…IFNN). Residues 53–87 (NNNNNNNNNNNNNNNNNNNNNNNNNNNNNNNNNNN) are compositionally biased toward low complexity. Positions 88–100 (NEEKSNNETEKTL) are enriched in basic and acidic residues. The span at 106-148 (TTTTTTTNNNNNNNNNNNNNNNNNNNNNNNNNNNNNNNNNNTN) shows a compositional bias: low complexity. Residues 149-170 (SSNDIYMNSPSSTLSSPGNAGN) are compositionally biased toward polar residues. Low complexity-rich tracts occupy residues 413–466 (TSNS…TPNS), 486–535 (NNSP…NNSC), and 554–576 (QQQQQQQSQPTTPTQSTQSPTTS). The span at 585–610 (LTINTSFKTSPMSSPKSFNKPSQSPQ) shows a compositional bias: polar residues. Positions 700–771 (ATRKMVTCIE…ATLTDKKTWN (72 aa)) constitute a PAS domain. The 53-residue stretch at 770-822 (WNGFIRTRHNNNTLIYFEASISPVLDQFQQILYYNCTKRDVTQKRIDEESKTL) folds into the PAC domain. The region spanning 837 to 1059 (MMSHDIRTPM…TFTCILKFKK (223 aa)) is the Histidine kinase domain. Position 840 is a phosphohistidine; by autocatalysis (histidine 840). Disordered stretches follow at residues 1068-1112 (LLPA…HQQH) and 1137-1298 (QHQL…PTSP). Composition is skewed to low complexity over residues 1075–1112 (LQQQQQQQQHQQQTQFHQHQQQTQFHQHQQQQLQHQQH), 1137–1153 (QHQLQQRQHHQQQLQQQ), and 1176–1194 (NQHIQQQQQQQQQQQQQQQ). Over residues 1204-1221 (HNSHGHNHHGSHHNHNHQ) the composition is skewed to basic residues. 2 stretches are compositionally biased toward polar residues: residues 1244 to 1257 (NEQQLESITENSFS) and 1275 to 1298 (NISQSPSPQSIHNGTTINQQPTSP). 2 Response regulatory domains span residues 1312–1492 (KMLF…MMYL) and 1570–1692 (KVLV…KKYG). Aspartate 1366 carries the post-translational modification 4-aspartylphosphate. Composition is skewed to low complexity over residues 1390 to 1412 (QHLQQQQEQEQQQQQEQQQSELQ) and 1420 to 1440 (KNSSQNNDNNNNNNKSNSSGG). Residues 1390-1440 (QHLQQQQEQEQQQQQEQQQSELQKQPDVENKNSSQNNDNNNNNNKSNSSGG) are disordered. A 4-aspartylphosphate modification is found at aspartate 1622.

Activation probably requires transfer of a phosphate group between a histidine in the kinase core (transmitter) domain and an aspartate of the receiver domain.

The catalysed reaction is ATP + protein L-histidine = ADP + protein N-phospho-L-histidine.. In terms of biological role, acts as a receptor histidine kinase for a signal transduction pathway. This protein undergoes an ATP-dependent autophosphorylation at a conserved histidine residue in the kinase core, and a phosphoryl group is then transferred to a conserved aspartate residue in the receiver domain. The sequence is that of Hybrid signal transduction histidine kinase L (dhkL) from Dictyostelium discoideum (Social amoeba).